The sequence spans 660 residues: Septation initiation protein sid4 (660 aa).

3 disordered regions span residues 79–243 (TKKE…QQHF), 368–396 (STTVSTPLCPPKRFPKSTKDFKEQKPDTK), and 459–503 (RHTS…PAKN). Polar residues-rich tracts occupy residues 125 to 138 (SFNSEKASYTSTPY), 156 to 176 (SNSPSFPPSQSHTSSYDQSPK), and 222 to 243 (RPNQYNPEPNFSLSSGYPQQHF). Residues 384-396 (STKDFKEQKPDTK) are compositionally biased toward basic and acidic residues. Polar residues-rich tracts occupy residues 459–480 (RHTSQNGDQESNESSKNAITTK) and 488–497 (KENTMLNDGS).

In terms of assembly, homodimer. Interacts with cdc11, sad1, plo1 and dma1.

It is found in the cytoplasm. The protein localises to the cytoskeleton. It localises to the microtubule organizing center. Its subcellular location is the spindle pole body. Required for activation of the spg1 GTPase signaling cascade which leads to the initiation of septation and the subsequent termination of mitosis. May act as a scaffold at the spindle pole body to which other components of the spg1 signaling cascade attach. This is Septation initiation protein sid4 (sid4) from Schizosaccharomyces pombe (strain 972 / ATCC 24843) (Fission yeast).